The chain runs to 154 residues: Myoglobin (154 aa).

Residues 2 to 148 enclose the Globin domain; the sequence is GLSDAEWQLV…FRNDIAAQYK (147 aa). Residue serine 4 is modified to Phosphoserine. Histidine 65 provides a ligand contact to nitrite. Histidine 65 lines the O2 pocket. Residue threonine 68 is modified to Phosphothreonine. Histidine 94 provides a ligand contact to heme b.

Belongs to the globin family. Monomeric.

It is found in the cytoplasm. The protein resides in the sarcoplasm. It carries out the reaction Fe(III)-heme b-[protein] + nitric oxide + H2O = Fe(II)-heme b-[protein] + nitrite + 2 H(+). It catalyses the reaction H2O2 + AH2 = A + 2 H2O. In terms of biological role, monomeric heme protein which primary function is to store oxygen and facilitate its diffusion within muscle tissues. Reversibly binds oxygen through a pentacoordinated heme iron and enables its timely and efficient release as needed during periods of heightened demand. Depending on the oxidative conditions of tissues and cells, and in addition to its ability to bind oxygen, it also has a nitrite reductase activity whereby it regulates the production of bioactive nitric oxide. Under stress conditions, like hypoxia and anoxia, it also protects cells against reactive oxygen species thanks to its pseudoperoxidase activity. In Oryctolagus cuniculus (Rabbit), this protein is Myoglobin (MB).